Reading from the N-terminus, the 334-residue chain is Putative violet-sensitive opsin (334 aa).

At 1–29 (MGKYFYLYENISKVGPYDGPQYYLAPTWA) the chain is on the extracellular side. Asparagine 10 is a glycosylation site (N-linked (GlcNAc...) asparagine). Residues 30–54 (FYLQAAFMGFVFFVGTPLNFVVLLA) form a helical membrane-spanning segment. The Cytoplasmic segment spans residues 55–66 (TAKYKKLRVPLN). Residues 67–88 (YILVNITFAGFIFVTFSVSQVF) form a helical membrane-spanning segment. Over 89–106 (LASVRGYYFFGQTLCALE) the chain is Extracellular. A disulfide bridge connects residues cysteine 103 and cysteine 179. Residues 107–126 (AAVGAVAGLVTSWSLAVLSF) form a helical membrane-spanning segment. At 127 to 145 (ERYLVICKPFGAFKFGSNH) the chain is on the cytoplasmic side. Residues 146–168 (ALAAVIFTWFMGVVRCPPFFGWS) form a helical membrane-spanning segment. Residues 169 to 194 (RYIPEGLGCSCGPDWYTNCEEFSCAS) lie on the Extracellular side of the membrane. Residues 195–222 (YSKFLLVTCFICPITIIIFSYSQLLGAL) traverse the membrane as a helical segment. At 223 to 244 (RAVAAQQAESASTQKAEKEVSR) the chain is on the cytoplasmic side. A helical transmembrane segment spans residues 245–272 (MIIVMVASFVTCYGPYALTAQYYAYSQD). Residues 273–279 (ENKDYRL) are Extracellular-facing. The chain crosses the membrane as a helical span at residues 280–301 (VTIPAFFSKSSCVYNPLIYAFM). Position 288 is an N6-(retinylidene)lysine (lysine 288). The Cytoplasmic portion of the chain corresponds to 302–334 (NKQFNGCIMEMVFGKKMEEASEVSSKTEVSTDS).

Belongs to the G-protein coupled receptor 1 family. Opsin subfamily. Phosphorylated on some or all of the serine and threonine residues present in the C-terminal region. As to expression, the three color pigments are found in the cone photoreceptor cells.

Its subcellular location is the membrane. Visual pigments are the light-absorbing molecules that mediate vision. They consist of an apoprotein, opsin, covalently linked to cis-retinal. This Oryzias latipes (Japanese rice fish) protein is Putative violet-sensitive opsin.